A 290-amino-acid chain; its full sequence is Ribosomal RNA small subunit methyltransferase A (290 aa).

The S-adenosyl-L-methionine site is built by N27, L29, G54, E75, D100, and N125.

The protein belongs to the class I-like SAM-binding methyltransferase superfamily. rRNA adenine N(6)-methyltransferase family. RsmA subfamily.

It is found in the cytoplasm. The enzyme catalyses adenosine(1518)/adenosine(1519) in 16S rRNA + 4 S-adenosyl-L-methionine = N(6)-dimethyladenosine(1518)/N(6)-dimethyladenosine(1519) in 16S rRNA + 4 S-adenosyl-L-homocysteine + 4 H(+). Functionally, specifically dimethylates two adjacent adenosines (A1518 and A1519) in the loop of a conserved hairpin near the 3'-end of 16S rRNA in the 30S particle. May play a critical role in biogenesis of 30S subunits. The chain is Ribosomal RNA small subunit methyltransferase A from Streptococcus pneumoniae (strain P1031).